The sequence spans 265 residues: Small ribosomal subunit protein eS1 (265 aa).

The interval 234-256 (EGSTTTSKGVTSEGGEKVDRVDG) is disordered. Residues 247–256 (GGEKVDRVDG) are compositionally biased toward basic and acidic residues.

This sequence belongs to the eukaryotic ribosomal protein eS1 family. In terms of assembly, component of the small ribosomal subunit. Mature ribosomes consist of a small (40S) and a large (60S) subunit. The 40S subunit contains about 33 different proteins and 1 molecule of RNA (18S). The 60S subunit contains about 49 different proteins and 3 molecules of RNA (28S, 5.8S and 5S).

It is found in the cytoplasm. The protein is Small ribosomal subunit protein eS1 of Aplysia californica (California sea hare).